Here is a 474-residue protein sequence, read N- to C-terminus: Gamma-aminobutyric acid receptor subunit beta-1 (474 aa).

Residues 1–25 form the signal peptide; the sequence is MWTVQNRESLGLLSFPVMIAMVCCA. The Extracellular segment spans residues 26 to 245; it reads HSANEPSNMS…SFRLKRNIGY (220 aa). N-linked (GlcNAc...) asparagine glycosylation is found at Asn33 and Asn105. Tyr122 is a binding site for histamine. A disulfide bond links Cys161 and Cys175. The N-linked (GlcNAc...) asparagine glycan is linked to Asn174. Residues 181 to 182 and Thr227 contribute to the histamine site; that span reads SY. Residues Tyr182 and Thr227 each contribute to the 4-aminobutanoate site. The next 3 helical transmembrane spans lie at 246–267, 271–293, and 305–327; these read FILQ…SFWI, ASAA…STHL, and AIDI…YAFV. The Cytoplasmic segment spans residues 328 to 451; it reads NYIFFGKGPQ…DLTDVNSIDK (124 aa). A helical transmembrane segment spans residues 452–473; the sequence is WSRMFFPITFSLFNVVYWLYYV.

The protein belongs to the ligand-gated ion channel (TC 1.A.9) family. Gamma-aminobutyric acid receptor (TC 1.A.9.5) subfamily. GABRB1 sub-subfamily. In terms of assembly, heteropentamer, formed by a combination of alpha (GABRA1-6), beta (GABRB1-3), gamma (GABRG1-3), delta (GABRD), epsilon (GABRE), rho (GABRR1-3), pi (GABRP) and theta (GABRQ) chains, each subunit exhibiting distinct physiological and pharmacological properties. Binds UBQLN1.

Its subcellular location is the postsynaptic cell membrane. The protein localises to the cell membrane. It carries out the reaction chloride(in) = chloride(out). With respect to regulation, potentiated by histamine. Functionally, beta subunit of the heteropentameric ligand-gated chloride channel gated by gamma-aminobutyric acid (GABA), a major inhibitory neurotransmitter in the brain. GABA-gated chloride channels, also named GABA(A) receptors (GABAAR), consist of five subunits arranged around a central pore and contain GABA active binding site(s) located at the alpha and beta subunit interface(s). When activated by GABA, GABAARs selectively allow the flow of chloride anions across the cell membrane down their electrochemical gradient. Chloride influx into the postsynaptic neuron following GABAAR opening decreases the neuron ability to generate a new action potential, thereby reducing nerve transmission. Beta-containing GABAARs can simultaneously bind GABA and histamine where histamine binds at the interface of two neighboring beta subunits, which may be involved in the regulation of sleep and wakefulness. The polypeptide is Gamma-aminobutyric acid receptor subunit beta-1 (GABRB1) (Bos taurus (Bovine)).